Here is a 104-residue protein sequence, read N- to C-terminus: Large ribosomal subunit protein uL24 (104 aa).

It belongs to the universal ribosomal protein uL24 family. In terms of assembly, part of the 50S ribosomal subunit.

In terms of biological role, one of two assembly initiator proteins, it binds directly to the 5'-end of the 23S rRNA, where it nucleates assembly of the 50S subunit. One of the proteins that surrounds the polypeptide exit tunnel on the outside of the subunit. The polypeptide is Large ribosomal subunit protein uL24 (Pectobacterium carotovorum subsp. carotovorum (strain PC1)).